Reading from the N-terminus, the 186-residue chain is Nascent polypeptide-associated complex subunit beta (186 aa).

The NAC-A/B domain maps to 65-130; that stretch reads GADDKKLQTT…GEEKELTELV (66 aa). A disordered region spans residues 153–186; sequence QNMQKQAGAEGKKDEDEDDIPDLVEGENFESNVE. The span at 167–186 shows a compositional bias: acidic residues; sequence EDEDDIPDLVEGENFESNVE.

It belongs to the NAC-beta family. As to quaternary structure, part of the nascent polypeptide-associated complex (NAC), consisting of egd2 and egd1. NAC associates with ribosomes via egd1.

Its subcellular location is the cytoplasm. The protein localises to the nucleus. Functionally, component of the nascent polypeptide-associated complex (NAC), a dynamic component of the ribosomal exit tunnel, protecting the emerging polypeptides from interaction with other cytoplasmic proteins to ensure appropriate nascent protein targeting. The NAC complex also promotes mitochondrial protein import by enhancing productive ribosome interactions with the outer mitochondrial membrane and blocks the inappropriate interaction of ribosomes translating non-secretory nascent polypeptides with translocation sites in the membrane of the endoplasmic reticulum. EGD1 may act as a transcription factor that exert a negative effect on the expression of several genes that are transcribed by RNA polymerase II. The sequence is that of Nascent polypeptide-associated complex subunit beta (egd1) from Aspergillus fumigatus (strain ATCC MYA-4609 / CBS 101355 / FGSC A1100 / Af293) (Neosartorya fumigata).